We begin with the raw amino-acid sequence, 220 residues long: Ribosome assembly protein 3 (220 aa).

A disordered region spans residues 1 to 91 (MSAGDISAIN…VSDVELTDEE (91 aa)). Over residues 13–24 (SVKKNRRRKKRR) the composition is skewed to basic residues. The segment covering 29–39 (SSSDSSSSDPS) has biased composition (low complexity). Positions 41–72 (ESEKEEIQNGAIEEHVGENGKSDHVFSKGNDE) are enriched in basic and acidic residues. Acidic residues predominate over residues 73–91 (DKQEDIAIEVSDVELTDEE). A Phosphoserine modification is found at Ser83. A Phosphothreonine modification is found at Thr88. Ser99 carries the phosphoserine modification.

It belongs to the RSA3 family. In terms of assembly, associates with nucleolar pre-ribosomal particles. Interacts with DBP6. Together with DBP6, NOP8, URB1 and URB2, forms an RNA-independent complex, which is required during early maturation of nascent 60S ribosomal subunits.

It is found in the nucleus. It localises to the nucleolus. Functionally, required for efficient biogenesis of the 60S ribosomal subunit. The chain is Ribosome assembly protein 3 (RSA3) from Saccharomyces cerevisiae (strain ATCC 204508 / S288c) (Baker's yeast).